The chain runs to 526 residues: Peptide chain release factor 3 (526 aa).

The 267-residue stretch at 11 to 277 folds into the tr-type G domain; sequence SKRRTFAIIS…SLIKWAPSPL (267 aa). Residues 20 to 27, 88 to 92, and 142 to 145 contribute to the GTP site; these read SHPDAGKT, DTPGH, and NKLD.

It belongs to the TRAFAC class translation factor GTPase superfamily. Classic translation factor GTPase family. PrfC subfamily.

It localises to the cytoplasm. Increases the formation of ribosomal termination complexes and stimulates activities of RF-1 and RF-2. It binds guanine nucleotides and has strong preference for UGA stop codons. It may interact directly with the ribosome. The stimulation of RF-1 and RF-2 is significantly reduced by GTP and GDP, but not by GMP. The sequence is that of Peptide chain release factor 3 from Buchnera aphidicola subsp. Acyrthosiphon pisum (strain 5A).